Here is a 1082-residue protein sequence, read N- to C-terminus: MAARRITQETFDAVLQEKAKRYHMDASGEAVSETLQFKAQDLLRAVPRSRAEMYDDVHSDGRYSLSGSVAHSRDAGREGLRSDVFPGPSFRSSNPSISDDSYFRKECGRDLEFSHSDSRDQVIGHRKLGHFRSQDWKFALRGSWEQDFGHPVSQESSWSQEYSFGPSAVLGDFGSSRLIEKECLEKESRDYDVDHPGEADSVLRGGSQVQARGRALNIVDQEGSLLGKGETQGLLTAKGGVGKLVTLRNVSTKKIPTVNRITPKTQGTNQIQKNTPSPDVTLGTNPGTEDIQFPIQKIPLGLDLKNLRLPRRKMSFDIIDKSDVFSRFGIEIIKWAGFHTIKDDIKFSQLFQTLFELETETCAKMLASFKCSLKPEHRDFCFFTIKFLKHSALKTPRVDNEFLNMLLDKGAVKTKNCFFEIIKPFDKYIMRLQDRLLKSVTPLLMACNAYELSVKMKTLSNPLDLALALETTNSLCRKSLALLGQTFSLASSFRQEKILEAVGLQDIAPSPAAFPNFEDSTLFGREYIDHLKAWLVSSGCPLQVKKAEPEPMREEEKMIPPTKPEIQAKAPSSLSDAVPQRADHRVVGTIDQLVKRVIEGSLSPKERTLLKEDPAYWFLSDENSLEYKYYKLKLAEMQRMSENLRGADQKPTSADCAVRAMLYSRAVRNLKKKLLPWQRRGLLRAQGLRGWKARRATTGTQTLLSSGTRLKHHGRQAPGLSQAKPSLPDRNDAAKDCPPDPVGPSPQDPSLEASGPSPKPAGVDISEAPQTSSPCPSADIDMKTMETAEKLARFVAQVGPEIEQFSIENSTDNPDLWFLHDQNSSAFKFYRKKVFELCPSICFTSSPHNLHTGGGDTTGSQESPVDLMEGEAEFEDEPPPREAELESPEVMPEEEDEDDEDGGEEAPAPGGAGKSEGSTPADGLPGEAAEDDLAGAPALSQASSGTCFPRKRISSKSLKVGMIPAPKRVCLIQEPKVHEPVRIAYDRPRGRPMSKKKKPKDLDFAQQKLTDKNLGFQMLQKMGWKEGHGLGSLGKGIREPVSVGTPSEGEGLGADGQEHKEDTFDVFRQRMMQMYRHKRANK.

T7 is subject to Phosphothreonine. The segment at 65–97 (LSGSVAHSRDAGREGLRSDVFPGPSFRSSNPSI) is disordered. Basic and acidic residues predominate over residues 71–81 (HSRDAGREGLR). S96 and S224 each carry phosphoserine. K228 participates in a covalent cross-link: Glycyl lysine isopeptide (Lys-Gly) (interchain with G-Cter in SUMO2). Position 275 is a phosphothreonine (T275). The residue at position 277 (S277) is a Phosphoserine. K305 is covalently cross-linked (Glycyl lysine isopeptide (Lys-Gly) (interchain with G-Cter in SUMO2)). A phosphoserine mark is found at S315, S573, and S603. Residues 590 to 633 (IDQLVKRVIEGSLSPKERTLLKEDPAYWFLSDENSLEYKYYKLK) form an SURP motif 1 repeat. K650 is covalently cross-linked (Glycyl lysine isopeptide (Lys-Gly) (interchain with G-Cter in SUMO2)). Residues 694–779 (RRATTGTQTL…QTSSPCPSAD (86 aa)) form a disordered region. Residues 697–708 (TTGTQTLLSSGT) are compositionally biased toward low complexity. Positions 727-738 (LPDRNDAAKDCP) are enriched in basic and acidic residues. A phosphoserine mark is found at S754 and S757. One copy of the SURP motif 2 repeat lies at 787 to 830 (TAEKLARFVAQVGPEIEQFSIENSTDNPDLWFLHDQNSSAFKFY). Disordered stretches follow at residues 849–930 (NLHT…EAAE), 982–1002 (RIAY…PKDL), and 1030–1061 (LGSL…EHKE). Phosphoserine is present on S863. 2 stretches are compositionally biased toward acidic residues: residues 868-877 (MEGEAEFEDE) and 885-904 (LESP…DGGE). Residues 990-999 (GRPMSKKKKP) show a composition bias toward basic residues. A Nuclear localization signal motif is present at residues 995 to 1000 (KKKKPK). The G-patch domain maps to 1011-1057 (DKNLGFQMLQKMGWKEGHGLGSLGKGIREPVSVGTPSEGEGLGADGQ).

In terms of tissue distribution, detected in adult testis, and in fetal brain and kidney.

It is found in the nucleus. In terms of biological role, may play a role in mRNA splicing. The protein is SURP and G-patch domain-containing protein 2 (SUGP2) of Homo sapiens (Human).